The chain runs to 107 residues: UPF0060 membrane protein RPB_2370 (107 aa).

4 consecutive transmembrane segments (helical) span residues 5-25 (IIYV…WGWL), 31-51 (VWWL…LTLV), 61-81 (AAYG…VEGV), and 85-105 (RWDV…LWGP).

The protein belongs to the UPF0060 family.

It is found in the cell inner membrane. This is UPF0060 membrane protein RPB_2370 from Rhodopseudomonas palustris (strain HaA2).